A 215-amino-acid polypeptide reads, in one-letter code: Probable transaldolase (215 aa).

K83 functions as the Schiff-base intermediate with substrate in the catalytic mechanism.

The protein belongs to the transaldolase family. Type 3B subfamily.

Its subcellular location is the cytoplasm. It carries out the reaction D-sedoheptulose 7-phosphate + D-glyceraldehyde 3-phosphate = D-erythrose 4-phosphate + beta-D-fructose 6-phosphate. It participates in carbohydrate degradation; pentose phosphate pathway; D-glyceraldehyde 3-phosphate and beta-D-fructose 6-phosphate from D-ribose 5-phosphate and D-xylulose 5-phosphate (non-oxidative stage): step 2/3. Transaldolase is important for the balance of metabolites in the pentose-phosphate pathway. The protein is Probable transaldolase of Clostridium perfringens (strain ATCC 13124 / DSM 756 / JCM 1290 / NCIMB 6125 / NCTC 8237 / Type A).